The following is a 1375-amino-acid chain: DNA-directed RNA polymerase subunit beta (1375 aa).

This sequence belongs to the RNA polymerase beta chain family. As to quaternary structure, the RNAP catalytic core consists of 2 alpha, 1 beta, 1 beta' and 1 omega subunit. When a sigma factor is associated with the core the holoenzyme is formed, which can initiate transcription.

It carries out the reaction RNA(n) + a ribonucleoside 5'-triphosphate = RNA(n+1) + diphosphate. Functionally, DNA-dependent RNA polymerase catalyzes the transcription of DNA into RNA using the four ribonucleoside triphosphates as substrates. This chain is DNA-directed RNA polymerase subunit beta, found in Coxiella burnetii (strain CbuG_Q212) (Coxiella burnetii (strain Q212)).